A 276-amino-acid polypeptide reads, in one-letter code: Ribosomal RNA small subunit methyltransferase A (276 aa).

Positions 27, 29, 54, 75, 101, and 122 each coordinate S-adenosyl-L-methionine.

The protein belongs to the class I-like SAM-binding methyltransferase superfamily. rRNA adenine N(6)-methyltransferase family. RsmA subfamily.

It is found in the cytoplasm. It catalyses the reaction adenosine(1518)/adenosine(1519) in 16S rRNA + 4 S-adenosyl-L-methionine = N(6)-dimethyladenosine(1518)/N(6)-dimethyladenosine(1519) in 16S rRNA + 4 S-adenosyl-L-homocysteine + 4 H(+). Functionally, specifically dimethylates two adjacent adenosines (A1518 and A1519) in the loop of a conserved hairpin near the 3'-end of 16S rRNA in the 30S particle. May play a critical role in biogenesis of 30S subunits. This is Ribosomal RNA small subunit methyltransferase A from Brucella abortus biovar 1 (strain 9-941).